Reading from the N-terminus, the 287-residue chain is F420-non-reducing hydrogenase vhu subunit G (287 aa).

It belongs to the [NiFe]/[NiFeSe] hydrogenase small subunit family. In terms of assembly, the F420-non-reducing hydrogenase vhu is composed of four subunits; VhuA, VhuD, VhuG and VhuU.

The protein is F420-non-reducing hydrogenase vhu subunit G (vhuG) of Methanococcus voltae.